The sequence spans 322 residues: Acetyl-coenzyme A carboxylase carboxyl transferase subunit alpha (322 aa).

One can recognise a CoA carboxyltransferase C-terminal domain in the interval 39–293 (RLQKKSQALT…RRALTDTLAE (255 aa)).

This sequence belongs to the AccA family. Acetyl-CoA carboxylase is a heterohexamer composed of biotin carboxyl carrier protein (AccB), biotin carboxylase (AccC) and two subunits each of ACCase subunit alpha (AccA) and ACCase subunit beta (AccD).

The protein localises to the cytoplasm. The catalysed reaction is N(6)-carboxybiotinyl-L-lysyl-[protein] + acetyl-CoA = N(6)-biotinyl-L-lysyl-[protein] + malonyl-CoA. It participates in lipid metabolism; malonyl-CoA biosynthesis; malonyl-CoA from acetyl-CoA: step 1/1. Its function is as follows. Component of the acetyl coenzyme A carboxylase (ACC) complex. First, biotin carboxylase catalyzes the carboxylation of biotin on its carrier protein (BCCP) and then the CO(2) group is transferred by the carboxyltransferase to acetyl-CoA to form malonyl-CoA. The sequence is that of Acetyl-coenzyme A carboxylase carboxyl transferase subunit alpha from Thiobacillus denitrificans (strain ATCC 25259 / T1).